The following is a 103-amino-acid chain: Protein S100-A16 (103 aa).

The 36-residue stretch at 12–47 folds into the EF-hand 1; degenerate domain; it reads VIVLVENFYKYVSKYSLVKNKISKSSFREMLQKELN. The 36-residue stretch at 54–89 folds into the EF-hand 2 domain; the sequence is GNRKAADKLIQNLDANHDGRISFDEYWTLIGGITGP. Residues D67, N69, D71, R73, and E78 each coordinate Ca(2+).

The protein belongs to the S-100 family. As to quaternary structure, homodimer. Interacts with TP53. In terms of tissue distribution, ubiquitous. Highly expressed in esophagus, adipose tissues and colon. Expressed at lower level in lung, brain, pancreas and skeletal muscle. Expression is up-regulated in tumors of bladder, lung, thyroid gland, pancreas and ovary. Expressed in astrocytes.

The protein resides in the nucleus. It is found in the nucleolus. It localises to the cytoplasm. In terms of biological role, calcium-binding protein. Binds one calcium ion per monomer. Can promote differentiation of adipocytes (in vitro). Overexpression in preadipocytes increases their proliferation, enhances adipogenesis and reduces insulin-stimulated glucose uptake. This chain is Protein S100-A16, found in Homo sapiens (Human).